The sequence spans 219 residues: MIHAISAVNRHLYEDVLEQHFRLRHDIFVEERHWETLRRPDGREVDSYDDEDTVYLLALEGRRVVGGHRLYPTTKPSMMSEVFPHLAAVRGCPSDPLIWEWSRYFVVRDRRDGALNLQLMAAVQEFCLDQGIAQVSAIMETWWLPRFHEAGFVVTPLGLPALVENAWTMAATVDIRRQTLDVLHDRIGMPSIVQQDGPRLDAVARANLCGLAAAQRKSA.

The protein belongs to the autoinducer synthase family.

The enzyme catalyses 3-methylbutanoyl-CoA + S-adenosyl-L-methionine = N-isovaleryl-L-homoserine lactone + S-methyl-5'-thioadenosine + CoA + H(+). Its function is as follows. Catalyzes the synthesis of IV-HSL (isovaleryl-homoserine lactone), a quorum-sensing (QS) autoinducer molecule which binds to BjaR1 transcriptional regulator to activate expression of QS-dependent genes. Is active with isovaleryl-CoA but cannot use isovaleryl-ACP as acyl donor. This Bradyrhizobium diazoefficiens (strain JCM 10833 / BCRC 13528 / IAM 13628 / NBRC 14792 / USDA 110) protein is Isovaleryl-homoserine lactone synthase (bjaI).